Reading from the N-terminus, the 183-residue chain is Large ribosomal subunit protein eL18 (183 aa).

The interval 146–183 (HFGPAPGVPHSHTKPYVRSKGRKFEKARGRRKSRGFRV) is disordered. Composition is skewed to basic residues over residues 156–166 (SHTKPYVRSKG) and 173–183 (RGRRKSRGFRV).

It belongs to the eukaryotic ribosomal protein eL18 family.

This Cicer arietinum (Chickpea) protein is Large ribosomal subunit protein eL18 (RPL18).